Here is a 102-residue protein sequence, read N- to C-terminus: MLSLVKRSILHSIPITRHILPIQLILVKMNHVQIRNIKLYHFISYGFMLTKLTVFLFNLFFYRLRILCRLTLLILSLPVQIYIKEIQTKMLEKHTASDTSCI.

This is an uncharacterized protein from Saccharomyces cerevisiae (strain ATCC 204508 / S288c) (Baker's yeast).